A 657-amino-acid polypeptide reads, in one-letter code: Matrix metalloproteinase-15 (657 aa).

Residues 1-36 (MGSDRSALGRPGCTGSCLSSRASLLPLLLVLLDCLG) form the signal peptide. A propeptide spanning residues 37–127 (HGTASKDAEV…KANLRRRRKR (91 aa)) is cleaved from the precursor. The Cysteine switch signature appears at 105–112 (PRCGVPDQ). Zn(2+) is bound at residue C107. At 128–614 (YTLTGKAWNN…MEEVVRTVNV (487 aa)) the chain is on the extracellular side. The N-linked (GlcNAc...) asparagine glycan is linked to N146. Residue H255 participates in Zn(2+) binding. The active site involves E256. Zn(2+)-binding residues include H259 and H265. A disordered region spans residues 295 to 365 (IQQLYGSPDG…ERPDQYGPNI (71 aa)). Pro residues predominate over residues 328-337 (PRPPQPPHPG). Hemopexin repeat units lie at residues 363 to 411 (PNIC…WRGL), 412 to 457 (PGNI…GTDI), 459 to 507 (YDRI…QGIP), and 508 to 555 (TSPK…FMGC). A disulfide bridge connects residues C366 and C555. A glycan (N-linked (GlcNAc...) asparagine) is linked at N414. The interval 561 to 599 (PRSRWPDVARPPFNPNGGAEPEADGDSKEENAGDKDEGS) is disordered. A compositionally biased stretch (basic and acidic residues) spans 585-599 (GDSKEENAGDKDEGS). Residues 615 to 635 (VMVLVPLLLLLCILGLAFALV) form a helical membrane-spanning segment. Over 636 to 657 (QMQRKGAPRMLLYCKRSLQEWV) the chain is Cytoplasmic.

It belongs to the peptidase M10A family. It depends on Zn(2+) as a cofactor. Ca(2+) is required as a cofactor. In terms of processing, the precursor is cleaved by a furin endopeptidase.

The protein localises to the membrane. Functionally, endopeptidase that degrades various components of the extracellular matrix. May activate progelatinase A. This is Matrix metalloproteinase-15 (Mmp15) from Mus musculus (Mouse).